The primary structure comprises 182 residues: Translation initiation factor IF-3, chloroplastic (182 aa).

This sequence belongs to the IF-3 family. In terms of assembly, monomer.

It is found in the plastid. The protein localises to the chloroplast. Functionally, IF-3 binds to the 30S ribosomal subunit and shifts the equilibrium between 70S ribosomes and their 50S and 30S subunits in favor of the free subunits, thus enhancing the availability of 30S subunits on which protein synthesis initiation begins. This is Translation initiation factor IF-3, chloroplastic from Porphyra purpurea (Red seaweed).